The sequence spans 356 residues: Branched-chain-amino-acid transaminase 1 (356 aa).

N6-(pyridoxal phosphate)lysine is present on K197.

It belongs to the class-IV pyridoxal-phosphate-dependent aminotransferase family. Pyridoxal 5'-phosphate is required as a cofactor.

The catalysed reaction is L-leucine + 2-oxoglutarate = 4-methyl-2-oxopentanoate + L-glutamate. The enzyme catalyses L-isoleucine + 2-oxoglutarate = (S)-3-methyl-2-oxopentanoate + L-glutamate. It catalyses the reaction L-valine + 2-oxoglutarate = 3-methyl-2-oxobutanoate + L-glutamate. Its pathway is amino-acid biosynthesis; L-isoleucine biosynthesis; L-isoleucine from 2-oxobutanoate: step 4/4. The protein operates within amino-acid biosynthesis; L-leucine biosynthesis; L-leucine from 3-methyl-2-oxobutanoate: step 4/4. It participates in amino-acid biosynthesis; L-valine biosynthesis; L-valine from pyruvate: step 4/4. Its activity is regulated as follows. Inhibited by canaline. Functionally, transaminates branched-chain amino acids and ketoglutarate. Involved in the final step of the methionine regeneration pathway, where ketomethiobutyrate (KMTB) is converted to methionine via a transamination. The amino donor preference is isoleucine, leucine, valine, phenylalanine, and tyrosine. The chain is Branched-chain-amino-acid transaminase 1 (ilvE) from Bacillus subtilis (strain 168).